We begin with the raw amino-acid sequence, 150 residues long: Large ribosomal subunit protein bL9 (150 aa).

The protein belongs to the bacterial ribosomal protein bL9 family.

Functionally, binds to the 23S rRNA. In Corynebacterium aurimucosum (strain ATCC 700975 / DSM 44827 / CIP 107346 / CN-1) (Corynebacterium nigricans), this protein is Large ribosomal subunit protein bL9.